The following is a 156-amino-acid chain: ATP synthase subunit b (156 aa).

The chain crosses the membrane as a helical span at residues 7 to 29 (LIGQLIAFALFTWFCVKFVWPPI).

The protein belongs to the ATPase B chain family. In terms of assembly, F-type ATPases have 2 components, F(1) - the catalytic core - and F(0) - the membrane proton channel. F(1) has five subunits: alpha(3), beta(3), gamma(1), delta(1), epsilon(1). F(0) has three main subunits: a(1), b(2) and c(10-14). The alpha and beta chains form an alternating ring which encloses part of the gamma chain. F(1) is attached to F(0) by a central stalk formed by the gamma and epsilon chains, while a peripheral stalk is formed by the delta and b chains.

It is found in the cell inner membrane. F(1)F(0) ATP synthase produces ATP from ADP in the presence of a proton or sodium gradient. F-type ATPases consist of two structural domains, F(1) containing the extramembraneous catalytic core and F(0) containing the membrane proton channel, linked together by a central stalk and a peripheral stalk. During catalysis, ATP synthesis in the catalytic domain of F(1) is coupled via a rotary mechanism of the central stalk subunits to proton translocation. Functionally, component of the F(0) channel, it forms part of the peripheral stalk, linking F(1) to F(0). This Actinobacillus succinogenes (strain ATCC 55618 / DSM 22257 / CCUG 43843 / 130Z) protein is ATP synthase subunit b.